We begin with the raw amino-acid sequence, 71 residues long: Gas vesicle protein A (71 aa).

The segment at 12-22 (LAEVIDRILDK) is alpha helix 1. Positions 23-32 (GIVIDAWVRV) are beta-strand 1. The interval 33–36 (SLVG) is beta turn. A beta-strand 2 region spans residues 37 to 46 (IELLAIEARI). The alpha helix 2 stretch occupies residues 47–70 (VIASVETYLKYAEAVGLTQSAAVP).

The protein belongs to the gas vesicle GvpA family. The gas vesicle shell is 2 nm thick and consists of a single layer of this protein. It forms helical ribs nearly perpendicular to the long axis of the vesicle.

The protein resides in the gas vesicle shell. Gas vesicles (GV) are hollow, gas filled proteinaceous nanostructures found in some microorganisms. During planktonic growth they allow positioning of the organism at a favorable depth for light or nutrient acquisition. GVs are highly permeable to gas. GvpA forms the protein shell. The ratio of GvpA:GvpC is estimated to be 33:1 and more recently 25:1. The chain is Gas vesicle protein A from Dolichospermum flosaquae (Anabaena flos-aquae).